Reading from the N-terminus, the 264-residue chain is 3-methyl-2-oxobutanoate hydroxymethyltransferase (264 aa).

2 residues coordinate Mg(2+): aspartate 45 and aspartate 84. Residues 45–46 (DS), aspartate 84, and lysine 112 contribute to the 3-methyl-2-oxobutanoate site. Residue glutamate 114 participates in Mg(2+) binding. Glutamate 181 (proton acceptor) is an active-site residue.

This sequence belongs to the PanB family. As to quaternary structure, homodecamer; pentamer of dimers. The cofactor is Mg(2+).

It localises to the cytoplasm. It catalyses the reaction 3-methyl-2-oxobutanoate + (6R)-5,10-methylene-5,6,7,8-tetrahydrofolate + H2O = 2-dehydropantoate + (6S)-5,6,7,8-tetrahydrofolate. Its pathway is cofactor biosynthesis; (R)-pantothenate biosynthesis; (R)-pantoate from 3-methyl-2-oxobutanoate: step 1/2. Its function is as follows. Catalyzes the reversible reaction in which hydroxymethyl group from 5,10-methylenetetrahydrofolate is transferred onto alpha-ketoisovalerate to form ketopantoate. This chain is 3-methyl-2-oxobutanoate hydroxymethyltransferase, found in Escherichia coli O157:H7.